The primary structure comprises 77 residues: Small ribosomal subunit protein bS16 (77 aa).

The protein belongs to the bacterial ribosomal protein bS16 family.

In Helicobacter hepaticus (strain ATCC 51449 / 3B1), this protein is Small ribosomal subunit protein bS16.